The chain runs to 281 residues: Nucleoid occlusion protein (281 aa).

The disordered stretch occupies residues 1–26 (MKHPFSRLFSFGEKEQEEAGGKQERE). The segment covering 12–26 (GEKEQEEAGGKQERE) has biased composition (basic and acidic residues). The H-T-H motif DNA-binding region spans 145–164 (EALAQRLGKGQSTIANKLRL).

It belongs to the ParB family.

Its subcellular location is the cytoplasm. It is found in the nucleoid. In terms of biological role, effects nucleoid occlusion by binding relatively nonspecifically to DNA and preventing the assembly of the division machinery in the vicinity of the nucleoid, especially under conditions that disturb the cell cycle. It helps to coordinate cell division and chromosome segregation by preventing the formation of the Z ring through the nucleoid, which would cause chromosome breakage. This is Nucleoid occlusion protein from Geobacillus thermodenitrificans (strain NG80-2).